The primary structure comprises 320 residues: MGKDNASYLQAFILVGSSDRPGLEKILFAVILIFCILTLVGNTAIILLLVMDVRLHTPMYFFLGNLSFLDLCFTASIAPQLLWNLGGPEKTITYHGCVAQLYIYMMLGSTECVLLVVMSHDRYVAVCRSLHYMAVMRPHLCLQLVTVAWCCGFLNSFIMCPQTMQLSRCGRRRVDHFLCEMPALIAMSCEETMLVEAIHLCPGGGSPPGAALPHPHLLWRDCSRGAEDEVSSRAKESLPHLLFSPHSGLSLLRNHHLRVPEAGQQLLPRSGEVPDSLLHHRHSQHQPPHLHFEEQGCEGDHEETSGVGERGWGASTRGTL.

Asn5 carries an N-linked (GlcNAc...) asparagine glycan. The next 4 membrane-spanning stretches (helical) occupy residues 30–50 (VILI…LLLV), 58–78 (PMYF…ASIA), 98–118 (VAQL…LVVM), and 140–160 (LCLQ…FIMC). Cys97 and Cys179 are disulfide-bonded. Residues 267–320 (LPRSGEVPDSLLHHRHSQHQPPHLHFEEQGCEGDHEETSGVGERGWGASTRGTL) are disordered. Over residues 290-304 (LHFEEQGCEGDHEET) the composition is skewed to basic and acidic residues.

Belongs to the G-protein coupled receptor 1 family.

The protein resides in the cell membrane. In terms of biological role, odorant receptor. The polypeptide is Putative olfactory receptor 2W5 pseudogene (Homo sapiens (Human)).